Reading from the N-terminus, the 842-residue chain is G-type lectin S-receptor-like serine/threonine-protein kinase At1g11330 (842 aa).

An N-terminal signal peptide occupies residues 1-29; sequence MVVSVTIRRRFVLLLLACTCLLSRRLCFG. At 30–444 the chain is on the extracellular side; sequence EDRITFSSPI…AHSELKTHSN (415 aa). Residues 32 to 157 form the Bulb-type lectin domain; that stretch reads RITFSSPIKD…RNNGEILWES (126 aa). N-linked (GlcNAc...) asparagine glycans are attached at residues asparagine 63, asparagine 94, asparagine 122, asparagine 130, asparagine 196, and asparagine 260. The EGF-like; atypical domain maps to 294-330; it reads PYTDCDAYGRCGRFGSCHAGENPPCKCVKGFVPKNNT. 2 disulfides stabilise this stretch: cysteine 298–cysteine 310 and cysteine 304–cysteine 318. Asparagine 328, asparagine 336, asparagine 354, and asparagine 396 each carry an N-linked (GlcNAc...) asparagine glycan. The region spanning 349–435 is the PAN domain; the sequence is CERQRNVSNG…SGIDLFIRVA (87 aa). 2 disulfides stabilise this stretch: cysteine 389-cysteine 410 and cysteine 393-cysteine 399. A helical membrane pass occupies residues 445–465; that stretch reads LAVMIAAPVIGVMLIAAVCVL. Residues 466 to 842 lie on the Cytoplasmic side of the membrane; that stretch reads LACRKYKKRP…DVSLTAVTGR (377 aa). Residues 524–810 form the Protein kinase domain; sequence FSLRNKLGQG…SLADPKQPAF (287 aa). ATP-binding positions include 530–538 and lysine 552; that span reads LGQGGFGPV. 2 positions are modified to phosphoserine: serine 558 and serine 573. Positions 613–630 are caM-binding; that stretch reads MKQKILDWKTRFNIMEGI. Catalysis depends on aspartate 649, which acts as the Proton acceptor. Phosphoserine is present on residues serine 653 and serine 666. A Phosphothreonine modification is found at threonine 683. Phosphoserine is present on residues serine 726, serine 727, serine 821, and serine 830. The tract at residues 814 to 842 is disordered; it reads RGASEAESSDQSSQKVSINDVSLTAVTGR. The segment covering 818 to 827 has biased composition (low complexity); the sequence is EAESSDQSSQ. Over residues 828–842 the composition is skewed to polar residues; that stretch reads KVSINDVSLTAVTGR. Threonine 837 is modified (phosphothreonine).

The protein belongs to the protein kinase superfamily. Ser/Thr protein kinase family.

Its subcellular location is the cell membrane. The catalysed reaction is L-seryl-[protein] + ATP = O-phospho-L-seryl-[protein] + ADP + H(+). It catalyses the reaction L-threonyl-[protein] + ATP = O-phospho-L-threonyl-[protein] + ADP + H(+). In Arabidopsis thaliana (Mouse-ear cress), this protein is G-type lectin S-receptor-like serine/threonine-protein kinase At1g11330.